Reading from the N-terminus, the 387-residue chain is N-acetyldiaminopimelate deacetylase (387 aa).

Residue aspartate 75 is part of the active site. Residue glutamate 134 is the Proton acceptor of the active site.

The protein belongs to the peptidase M20A family. N-acetyldiaminopimelate deacetylase subfamily.

The catalysed reaction is N-acetyl-(2S,6S)-2,6-diaminopimelate + H2O = (2S,6S)-2,6-diaminopimelate + acetate. It functions in the pathway amino-acid biosynthesis; L-lysine biosynthesis via DAP pathway; LL-2,6-diaminopimelate from (S)-tetrahydrodipicolinate (acetylase route): step 3/3. Catalyzes the conversion of N-acetyl-diaminopimelate to diaminopimelate and acetate. This is N-acetyldiaminopimelate deacetylase from Leuconostoc citreum (strain KM20).